Consider the following 646-residue polypeptide: Serine/threonine-protein kinase sck2 (646 aa).

Disordered stretches follow at residues 17–85 (VSTN…LPEV) and 143–176 (GRDI…IQRT). A compositionally biased stretch (polar residues) spans 68–80 (SDQSTVGNRNSND). Positions 149–165 (SSRDSANVSRSSSMMSS) are enriched in low complexity. In terms of domain architecture, Protein kinase spans 266 to 527 (FVPLKLIGKG…VEEVMKHPFF (262 aa)). Residues 272-280 (IGKGTFGQV) and Lys295 each bind ATP. Residue Asp392 is the Proton acceptor of the active site. Residues 528-605 (DGIDWKKLAA…IDASAMDEAF (78 aa)) enclose the AGC-kinase C-terminal domain. The interval 609-646 (NSNDSASSISSQDDYSKDNSDMDLNRANDEVFMGQIDP) is disordered. Over residues 610–621 (SNDSASSISSQD) the composition is skewed to low complexity. The segment covering 622 to 637 (DYSKDNSDMDLNRAND) has biased composition (basic and acidic residues).

Belongs to the protein kinase superfamily. AGC Ser/Thr protein kinase family. PKC subfamily.

The enzyme catalyses L-seryl-[protein] + ATP = O-phospho-L-seryl-[protein] + ADP + H(+). It catalyses the reaction L-threonyl-[protein] + ATP = O-phospho-L-threonyl-[protein] + ADP + H(+). In terms of biological role, protein kinase that is part of growth control pathway which is at least partially redundant with the cAMP pathway. The polypeptide is Serine/threonine-protein kinase sck2 (sck2) (Schizosaccharomyces pombe (strain 972 / ATCC 24843) (Fission yeast)).